A 488-amino-acid chain; its full sequence is Bifunctional protein HldE (488 aa).

A ribokinase region spans residues 1-332; the sequence is MRESFLDTIQ…QELQSQQSAA (332 aa). 208–211 lines the ATP pocket; the sequence is NKRE. Asp-277 is an active-site residue. The cytidylyltransferase stretch occupies residues 359–488; that stretch reads FTNGCFDLLH…TSNIIRKLAS (130 aa).

In the N-terminal section; belongs to the carbohydrate kinase PfkB family. It in the C-terminal section; belongs to the cytidylyltransferase family. As to quaternary structure, homodimer.

The enzyme catalyses D-glycero-beta-D-manno-heptose 7-phosphate + ATP = D-glycero-beta-D-manno-heptose 1,7-bisphosphate + ADP + H(+). It catalyses the reaction D-glycero-beta-D-manno-heptose 1-phosphate + ATP + H(+) = ADP-D-glycero-beta-D-manno-heptose + diphosphate. Its pathway is nucleotide-sugar biosynthesis; ADP-L-glycero-beta-D-manno-heptose biosynthesis; ADP-L-glycero-beta-D-manno-heptose from D-glycero-beta-D-manno-heptose 7-phosphate: step 1/4. It functions in the pathway nucleotide-sugar biosynthesis; ADP-L-glycero-beta-D-manno-heptose biosynthesis; ADP-L-glycero-beta-D-manno-heptose from D-glycero-beta-D-manno-heptose 7-phosphate: step 3/4. Functionally, catalyzes the phosphorylation of D-glycero-D-manno-heptose 7-phosphate at the C-1 position to selectively form D-glycero-beta-D-manno-heptose-1,7-bisphosphate. Catalyzes the ADP transfer from ATP to D-glycero-beta-D-manno-heptose 1-phosphate, yielding ADP-D-glycero-beta-D-manno-heptose. In Methylobacillus flagellatus (strain ATCC 51484 / DSM 6875 / VKM B-1610 / KT), this protein is Bifunctional protein HldE.